A 150-amino-acid polypeptide reads, in one-letter code: uncharacterized protein (150 aa).

A run of 4 helical transmembrane segments spans residues 12–30 (IVQR…YFLF), 40–62 (RLLS…LVLF), 74–96 (IRRT…VLSG), and 106–128 (ALID…SRAV).

It is found in the cell membrane. This is an uncharacterized protein from Archaeoglobus fulgidus (strain ATCC 49558 / DSM 4304 / JCM 9628 / NBRC 100126 / VC-16).